We begin with the raw amino-acid sequence, 448 residues long: Glucose-6-phosphate isomerase (448 aa).

Glu288 acts as the Proton donor in catalysis. Catalysis depends on residues His309 and Lys423.

It belongs to the GPI family.

The protein localises to the cytoplasm. It catalyses the reaction alpha-D-glucose 6-phosphate = beta-D-fructose 6-phosphate. It participates in carbohydrate biosynthesis; gluconeogenesis. The protein operates within carbohydrate degradation; glycolysis; D-glyceraldehyde 3-phosphate and glycerone phosphate from D-glucose: step 2/4. In terms of biological role, catalyzes the reversible isomerization of glucose-6-phosphate to fructose-6-phosphate. This Fusobacterium nucleatum subsp. nucleatum (strain ATCC 25586 / DSM 15643 / BCRC 10681 / CIP 101130 / JCM 8532 / KCTC 2640 / LMG 13131 / VPI 4355) protein is Glucose-6-phosphate isomerase.